The primary structure comprises 125 residues: Large ribosomal subunit protein bL12 (125 aa).

It belongs to the bacterial ribosomal protein bL12 family. As to quaternary structure, homodimer. Part of the ribosomal stalk of the 50S ribosomal subunit. Forms a multimeric L10(L12)X complex, where L10 forms an elongated spine to which 2 to 4 L12 dimers bind in a sequential fashion. Binds GTP-bound translation factors.

Forms part of the ribosomal stalk which helps the ribosome interact with GTP-bound translation factors. Is thus essential for accurate translation. In Syntrophomonas wolfei subsp. wolfei (strain DSM 2245B / Goettingen), this protein is Large ribosomal subunit protein bL12.